The chain runs to 113 residues: Iron-sulfur cluster insertion protein ErpA (113 aa).

Cysteine 41, cysteine 105, and cysteine 107 together coordinate iron-sulfur cluster.

Belongs to the HesB/IscA family. In terms of assembly, homodimer. Iron-sulfur cluster serves as cofactor.

Functionally, required for insertion of 4Fe-4S clusters for at least IspG. This chain is Iron-sulfur cluster insertion protein ErpA, found in Aliivibrio fischeri (strain ATCC 700601 / ES114) (Vibrio fischeri).